The primary structure comprises 380 residues: Queuine tRNA-ribosyltransferase (380 aa).

The active-site Proton acceptor is the Asp-96. Residues 96–100, Asp-150, Gln-193, and Gly-220 each bind substrate; that span reads DSGGF. The RNA binding stretch occupies residues 251–257; that stretch reads GVGAPDS. Asp-270 functions as the Nucleophile in the catalytic mechanism. The tract at residues 275 to 279 is RNA binding; important for wobble base 34 recognition; that stretch reads TRIAR. Zn(2+) contacts are provided by Cys-308, Cys-310, Cys-313, and His-339.

This sequence belongs to the queuine tRNA-ribosyltransferase family. In terms of assembly, homodimer. Within each dimer, one monomer is responsible for RNA recognition and catalysis, while the other monomer binds to the replacement base PreQ1. It depends on Zn(2+) as a cofactor.

The enzyme catalyses 7-aminomethyl-7-carbaguanine + guanosine(34) in tRNA = 7-aminomethyl-7-carbaguanosine(34) in tRNA + guanine. It participates in tRNA modification; tRNA-queuosine biosynthesis. Catalyzes the base-exchange of a guanine (G) residue with the queuine precursor 7-aminomethyl-7-deazaguanine (PreQ1) at position 34 (anticodon wobble position) in tRNAs with GU(N) anticodons (tRNA-Asp, -Asn, -His and -Tyr). Catalysis occurs through a double-displacement mechanism. The nucleophile active site attacks the C1' of nucleotide 34 to detach the guanine base from the RNA, forming a covalent enzyme-RNA intermediate. The proton acceptor active site deprotonates the incoming PreQ1, allowing a nucleophilic attack on the C1' of the ribose to form the product. After dissociation, two additional enzymatic reactions on the tRNA convert PreQ1 to queuine (Q), resulting in the hypermodified nucleoside queuosine (7-(((4,5-cis-dihydroxy-2-cyclopenten-1-yl)amino)methyl)-7-deazaguanosine). The sequence is that of Queuine tRNA-ribosyltransferase from Streptococcus pyogenes serotype M3 (strain ATCC BAA-595 / MGAS315).